The following is a 283-amino-acid chain: NAD kinase (283 aa).

The Proton acceptor role is filled by Asp69. NAD(+)-binding positions include Asp69–Gly70, Asn138–Glu139, Lys166, Asp168, Leu176, Thr179–Ser184, and Gln235.

It belongs to the NAD kinase family. It depends on a divalent metal cation as a cofactor.

The protein resides in the cytoplasm. The catalysed reaction is NAD(+) + ATP = ADP + NADP(+) + H(+). Its function is as follows. Involved in the regulation of the intracellular balance of NAD and NADP, and is a key enzyme in the biosynthesis of NADP. Catalyzes specifically the phosphorylation on 2'-hydroxyl of the adenosine moiety of NAD to yield NADP. In Helicobacter acinonychis (strain Sheeba), this protein is NAD kinase.